The primary structure comprises 241 residues: MPKAVIFDLDGTLVHSLPGLTDALNKTLAEDDLAPLDEAAVKRMVGEGAGLLVARAFAAYGLGRADDADDTATQARLARFLAHYAPDPLAGASVYPGALALLGALAARGIRLGVCTNKPEGPARALLEGLGLADPIMDVVGGDTLAQRKPDPAPLRALLDSLGVEADQALMVGDSPTDVATAKAAGVPVVVMSYGYSREPVASLGALAVFDDFASLGDWLGFPQPGGDRLGATPALSENPA.

Catalysis depends on Asp-8, which acts as the Nucleophile. Residues Asp-8, Asp-10, and Asp-174 each coordinate Mg(2+).

This sequence belongs to the HAD-like hydrolase superfamily. CbbY/CbbZ/Gph/YieH family. Requires Mg(2+) as cofactor.

The catalysed reaction is 2-phosphoglycolate + H2O = glycolate + phosphate. The protein operates within organic acid metabolism; glycolate biosynthesis; glycolate from 2-phosphoglycolate: step 1/1. Its function is as follows. Specifically catalyzes the dephosphorylation of 2-phosphoglycolate. Is involved in the dissimilation of the intracellular 2-phosphoglycolate formed during the DNA repair of 3'-phosphoglycolate ends, a major class of DNA lesions induced by oxidative stress. The protein is Phosphoglycolate phosphatase of Rhodospirillum rubrum (strain ATCC 11170 / ATH 1.1.1 / DSM 467 / LMG 4362 / NCIMB 8255 / S1).